A 208-amino-acid chain; its full sequence is Peptidyl-prolyl cis-trans isomerase FKBP13, chloroplastic (208 aa).

2 disulfide bridges follow: cysteine 84–cysteine 96 and cysteine 185–cysteine 190. Residues 109 to 208 enclose the PPIase FKBP-type domain; it reads GQLIKAHYVG…LFDIEYIGKA (100 aa).

This sequence belongs to the FKBP-type PPIase family. In terms of assembly, interacts in vitro with LTO1. The precursor, but not the mature form of the protein, interacts with the Rieske protein. Expressed in stems, leaves and developing flower buds, but not in roots.

The protein resides in the plastid. It is found in the chloroplast thylakoid lumen. It carries out the reaction [protein]-peptidylproline (omega=180) = [protein]-peptidylproline (omega=0). Its activity is regulated as follows. PPIase activity is optimal in oxidized form (S-S) and minimal in reduced form (SH). Reduction of the oxidized form is mediated by thioredoxin (TRX-M). Its function is as follows. PPIases accelerate the folding of proteins. It catalyzes the cis-trans isomerization of proline imidic peptide bonds in oligopeptides. Responsive of the major PPIase activity in the chloroplast thylakoid lumen. Regulates the accumulation of Rieske protein, an essential component of the photosynthetic electron transport chain. The sequence is that of Peptidyl-prolyl cis-trans isomerase FKBP13, chloroplastic from Arabidopsis thaliana (Mouse-ear cress).